The following is a 324-amino-acid chain: 6-methylsalicylic acid decarboxylase (324 aa).

Residues histidine 7, histidine 9, histidine 157, and aspartate 274 each coordinate Zn(2+).

The protein belongs to the metallo-dependent hydrolases superfamily. ACMSD family. Monomer.

It localises to the cytoplasm. The protein resides in the cytosol. The enzyme catalyses 6-methylsalicylate + H(+) = 3-methylphenol + CO2. The protein operates within mycotoxin biosynthesis; patulin biosynthesis. 6-methylsalicylic acid decarboxylase; part of the gene cluster that mediates the biosynthesis of patulin, an acetate-derived tetraketide mycotoxin produced by several fungal species that shows antimicrobial properties against several bacteria. PatG catalyzes the decarboxylation of 6-methylsalicylic acid to yield m-cresol. The pathway begins with the synthesis of 6-methylsalicylic acid by the polyketide synthase (PKS) patK via condensation of acetate and malonate units. The 6-methylsalicylic acid decarboxylase patG then catalyzes the decarboxylation of 6-methylsalicylic acid to yield m-cresol (also known as 3-methylphenol). These first reactions occur in the cytosol. The intermediate m-cresol is then transported into the endoplasmic reticulum where the cytochrome P450 monooxygenase patH converts it to m-hydroxybenzyl alcohol, which is further converted to gentisyl alcohol by the cytochrome P450 monooxygenase patI. The oxidoreductases patJ and patO further convert gentisyl alcohol to isoepoxydon in the vacuole. PatN catalyzes then the transformation of isoepoxydon into phyllostine. The cluster protein patF is responsible for the conversion from phyllostine to neopatulin whereas the alcohol dehydrogenase patD converts neopatulin to E-ascladiol. The steps between isoepoxydon and E-ascladiol occur in the cytosol, and E-ascladiol is probably secreted to the extracellular space by one of the cluster-specific transporters patC or patM. Finally, the secreted patulin synthase patE catalyzes the conversion of E-ascladiol to patulin. The chain is 6-methylsalicylic acid decarboxylase from Penicillium expansum (Blue mold rot fungus).